Reading from the N-terminus, the 259-residue chain is AA9 family lytic polysaccharide monooxygenase E (259 aa).

The signal sequence occupies residues 1-20; it reads MKATVLAGLAAVIAAQGVAG. H21 and H99 together coordinate Cu(2+). Cysteines 69 and 193 form a disulfide. O2 is bound by residues H179 and Q188. Y190 contributes to the Cu(2+) binding site.

The protein belongs to the polysaccharide monooxygenase AA9 family. It depends on Cu(2+) as a cofactor.

The protein resides in the secreted. It carries out the reaction [(1-&gt;4)-beta-D-glucosyl]n+m + reduced acceptor + O2 = 4-dehydro-beta-D-glucosyl-[(1-&gt;4)-beta-D-glucosyl]n-1 + [(1-&gt;4)-beta-D-glucosyl]m + acceptor + H2O.. Its function is as follows. Lytic polysaccharide monooxygenase (LPMO) that depolymerizes crystalline and amorphous polysaccharides via the oxidation of scissile alpha- or beta-(1-4)-glycosidic bonds, yielding C1 or C4 oxidation products. Catalysis by LPMOs requires the reduction of the active-site copper from Cu(II) to Cu(I) by a reducing agent and H(2)O(2) or O(2) as a cosubstrate. In Malbranchea cinnamomea (Thermophilic fungus), this protein is AA9 family lytic polysaccharide monooxygenase E.